The sequence spans 254 residues: Alcohol dehydrogenase 2 (254 aa).

10–33 (FVAGLGGIGFDTSREIVKSGPKNL) serves as a coordination point for NAD(+). S138 serves as a coordination point for substrate. Y151 acts as the Proton acceptor in catalysis.

It belongs to the short-chain dehydrogenases/reductases (SDR) family. As to quaternary structure, homodimer.

It catalyses the reaction a primary alcohol + NAD(+) = an aldehyde + NADH + H(+). The catalysed reaction is a secondary alcohol + NAD(+) = a ketone + NADH + H(+). This Drosophila wheeleri (Fruit fly) protein is Alcohol dehydrogenase 2 (Adh2).